A 344-amino-acid polypeptide reads, in one-letter code: Trace amine-associated receptor 8c (344 aa).

The Extracellular portion of the chain corresponds to 1-31 (MTSNFSQPALQLCYENTNGSCIKTPYSPGPR). 2 N-linked (GlcNAc...) asparagine glycosylation sites follow: N4 and N18. 2 disulfides stabilise this stretch: C21-C185 and C104-C189. The helical transmembrane segment at 32-52 (VILYMVYGFGAVLAVCGNLLV) threads the bilayer. The Cytoplasmic segment spans residues 53–67 (VISVLHFKQLHSPAN). A helical transmembrane segment spans residues 68–88 (FLIASLASADFLVGISVMPFS). Topologically, residues 89 to 111 (MVRSIESCWYFGDAFCSLHSCCD) are extracellular. The chain crosses the membrane as a helical span at residues 112–132 (VAFCYSSALHLCFISVDRYIA). At 133 to 146 (VTDPLVYPTKFTVS) the chain is on the cytoplasmic side. The helical transmembrane segment at 147–167 (VSGICISISWILPLVYSSAVF) threads the bilayer. Over 168 to 195 (YTGISAKGIESLVSALNCVGGCQVVVNQ) the chain is Extracellular. Residues 196–216 (DWVLISFLLFFIPTVVMIILY) traverse the membrane as a helical segment. Residues 217-260 (SKIFLVAKQQAVKIETSVSGNRGESSSESHKARVAKRERKAAKT) are Cytoplasmic-facing. A helical transmembrane segment spans residues 261-281 (LGVTVVAFMVSWLPYTIDALV). A topological domain (extracellular) is located at residue D282. The chain crosses the membrane as a helical span at residues 283–303 (AFMGFITPAYVYEICCWSAYY). Over 304–344 (NSAMNPLIYAFFYPWFRKAIKLILSGKILKGHSSTTNLFSE) the chain is Cytoplasmic.

Belongs to the G-protein coupled receptor 1 family. In terms of tissue distribution, specifically expressed in neurons of the olfactory epithelium.

The protein resides in the cell membrane. In terms of biological role, olfactory receptor specific for trace amines, such ascyclohexylamine (1-MPD). Trace amine compounds are enriched in animal body fluids and act on trace amine-associated receptors (TAARs) to elicit both intraspecific and interspecific innate behaviors. Ligand-binding causes a conformation change that triggers signaling via G(s)-class of G alpha proteins (GNAL or GNAS). The chain is Trace amine-associated receptor 8c from Mus musculus (Mouse).